The following is a 460-amino-acid chain: Glucan endo-1,3-beta-D-glucosidase (460 aa).

A signal peptide spans 1 to 26 (MAANVQTSSLLFLVFLLLQNFYSANS). Glu123 acts as the Proton donor in catalysis. The Nucleophile role is filled by Glu268. Positions 352 to 371 (NTQNPTTPATPTPTPKAAGS) are disordered. The N-linked (GlcNAc...) asparagine glycan is linked to Asn355. The cysteines at positions 373 and 435 are disulfide-linked. An N-linked (GlcNAc...) asparagine glycan is attached at Asn447.

It belongs to the glycosyl hydrolase 17 family. As to quaternary structure, homodimer. Glycosylated. Post-translationally, contains two additional disulfide bonds, but it is unclear if they are between the pairs Cys-392-Cys-398 and Cys-407-Cys-453 (PudMed:18096638) or between the pairs Cys-392-Cys-453 and Cys-398-Cys-407 (PudMed:12392450). Expressed only in pollen.

Its subcellular location is the secreted. The enzyme catalyses Hydrolysis of (1-&gt;3)-beta-D-glucosidic linkages in (1-&gt;3)-beta-D-glucans.. This Olea europaea (Common olive) protein is Glucan endo-1,3-beta-D-glucosidase (OLE9).